We begin with the raw amino-acid sequence, 120 residues long: Ribosome-binding factor A (120 aa).

The protein belongs to the RbfA family. As to quaternary structure, monomer. Binds 30S ribosomal subunits, but not 50S ribosomal subunits or 70S ribosomes.

It is found in the cytoplasm. One of several proteins that assist in the late maturation steps of the functional core of the 30S ribosomal subunit. Associates with free 30S ribosomal subunits (but not with 30S subunits that are part of 70S ribosomes or polysomes). Required for efficient processing of 16S rRNA. May interact with the 5'-terminal helix region of 16S rRNA. The sequence is that of Ribosome-binding factor A from Chlamydia abortus (strain DSM 27085 / S26/3) (Chlamydophila abortus).